A 232-amino-acid polypeptide reads, in one-letter code: MKRAVVVFSGGQDSTTCLIQALQQYDEVHCITFDYGQRHRTEIDVARELALQLGATAHKVLDVGMLNELAVSSLTRDSIPVPSYDANADGALPSTFVPGRNILFLTLASIYAYQVQAQAVITGVCETDFSGYPDCRDEFIKALNHAIDLGIGRDIAFITPLMWLDKAETWALADYYQQLDLIRHHTLTCYNGIKGDGCGQCAACHLRAKGLASYMANKQQVILNLKQKVGLA.

ATP is bound at residue 8-18 (FSGGQDSTTCL). Cys-189, Cys-198, Cys-201, and Cys-204 together coordinate Zn(2+).

Belongs to the QueC family. Zn(2+) serves as cofactor.

The catalysed reaction is 7-carboxy-7-deazaguanine + NH4(+) + ATP = 7-cyano-7-deazaguanine + ADP + phosphate + H2O + H(+). It functions in the pathway purine metabolism; 7-cyano-7-deazaguanine biosynthesis. Its function is as follows. Catalyzes the ATP-dependent conversion of 7-carboxy-7-deazaguanine (CDG) to 7-cyano-7-deazaguanine (preQ(0)). The polypeptide is 7-cyano-7-deazaguanine synthase (Yersinia pseudotuberculosis serotype O:1b (strain IP 31758)).